Reading from the N-terminus, the 812-residue chain is Zn(2)-C6 fungal-type transcription factor pigI (812 aa).

The segment at 42–74 (GCLHPRSPPRDRTAMADNSNSSPPASRRREKPQ) is disordered. Positions 77-105 (CTLCRRRKLRCDRRQPCETCVRRGLSLSC) form a DNA-binding region, zn(2)-C6 fungal-type.

The protein resides in the nucleus. Functionally, zn(2)-C6 fungal-type transcription factor; part of the gene cluster that mediates the biosynthesis of azaphilone pigments (MonAzPs), a complex mixture of compounds with a common azaphilone skeleton very widely used as food colorants. Acts probably as a negative regulator of the azaphilone pigments (MonAzPs) gene cluster. The protein is Zn(2)-C6 fungal-type transcription factor pigI of Monascus ruber (Mold).